The chain runs to 318 residues: Probable cell division protein WhiA (318 aa).

The segment at residues 281–314 (SLKELGQMLVPPVGKSGVNHRLRKIEEISKKLKE) is a DNA-binding region (H-T-H motif).

Belongs to the WhiA family.

Its function is as follows. Involved in cell division and chromosome segregation. The sequence is that of Probable cell division protein WhiA from Thermoanaerobacter pseudethanolicus (strain ATCC 33223 / 39E) (Clostridium thermohydrosulfuricum).